A 405-amino-acid chain; its full sequence is Argininosuccinate synthase (405 aa).

Residue 11 to 19 coordinates ATP; that stretch reads AYSGGLDTS. Residue Tyr-90 participates in L-citrulline binding. Gly-119 serves as a coordination point for ATP. Thr-121, Asn-125, and Asp-126 together coordinate L-aspartate. L-citrulline is bound at residue Asn-125. Positions 129, 178, 187, 263, and 275 each coordinate L-citrulline.

It belongs to the argininosuccinate synthase family. Type 1 subfamily. In terms of assembly, homotetramer.

Its subcellular location is the cytoplasm. It carries out the reaction L-citrulline + L-aspartate + ATP = 2-(N(omega)-L-arginino)succinate + AMP + diphosphate + H(+). It functions in the pathway amino-acid biosynthesis; L-arginine biosynthesis; L-arginine from L-ornithine and carbamoyl phosphate: step 2/3. The polypeptide is Argininosuccinate synthase (Legionella pneumophila (strain Paris)).